The primary structure comprises 297 residues: 33 kDa chaperonin (297 aa).

2 disulfide bridges follow: Cys232-Cys234 and Cys266-Cys269.

The protein belongs to the HSP33 family. In terms of processing, under oxidizing conditions two disulfide bonds are formed involving the reactive cysteines. Under reducing conditions zinc is bound to the reactive cysteines and the protein is inactive.

Its subcellular location is the cytoplasm. In terms of biological role, redox regulated molecular chaperone. Protects both thermally unfolding and oxidatively damaged proteins from irreversible aggregation. Plays an important role in the bacterial defense system toward oxidative stress. The polypeptide is 33 kDa chaperonin (Pseudomonas paraeruginosa (strain DSM 24068 / PA7) (Pseudomonas aeruginosa (strain PA7))).